A 339-amino-acid chain; its full sequence is DNA-directed RNA polymerase subunit alpha (339 aa).

The interval 1–235 is alpha N-terminal domain (alpha-NTD); sequence MVLQKNWQSL…DQLQLFINFD (235 aa). Residues 251–339 form an alpha C-terminal domain (alpha-CTD) region; the sequence is FNRNLLRKVD…DLAKRLDEPF (89 aa).

This sequence belongs to the RNA polymerase alpha chain family. In terms of assembly, homodimer. The RNAP catalytic core consists of 2 alpha, 1 beta, 1 beta' and 1 omega subunit. When a sigma factor is associated with the core the holoenzyme is formed, which can initiate transcription.

The enzyme catalyses RNA(n) + a ribonucleoside 5'-triphosphate = RNA(n+1) + diphosphate. Its function is as follows. DNA-dependent RNA polymerase catalyzes the transcription of DNA into RNA using the four ribonucleoside triphosphates as substrates. This Gluconacetobacter diazotrophicus (strain ATCC 49037 / DSM 5601 / CCUG 37298 / CIP 103539 / LMG 7603 / PAl5) protein is DNA-directed RNA polymerase subunit alpha.